Here is a 398-residue protein sequence, read N- to C-terminus: O-methyltransferase aoiO (398 aa).

D251 provides a ligand contact to S-adenosyl-L-methionine. H299 functions as the Proton acceptor in the catalytic mechanism.

The protein belongs to the class I-like SAM-binding methyltransferase superfamily. Cation-independent O-methyltransferase family.

O-methyltransferase; part of the gene cluster that mediates the biosynthesis of a methylated derivative of known natural products orthosporin and diaporthin. Seems not to be involved in the biosynthesis of the identified final product of the pathway and its function has still to be determined. This is O-methyltransferase aoiO from Aspergillus oryzae (strain ATCC 42149 / RIB 40) (Yellow koji mold).